The primary structure comprises 429 residues: uncharacterized protein (429 aa).

10 consecutive transmembrane segments (helical) span residues 26–46 (VALT…HDIF), 51–71 (TGID…VGVL), 99–119 (LVLV…VLLI), 135–155 (TSFL…TLVG), 173–193 (FMLH…AVLP), 223–243 (LLVK…AHPV), 278–298 (TLLF…TGVV), 311–331 (GNIV…SGII), 361–381 (WWAL…GASA), and 407–427 (VVTA…YFVL).

The protein belongs to the CitM (TC 2.A.11) transporter family.

The protein localises to the cell membrane. This is an uncharacterized protein from Mycobacterium tuberculosis (strain ATCC 25618 / H37Rv).